The following is a 171-amino-acid chain: S-ribosylhomocysteine lyase (171 aa).

3 residues coordinate Fe cation: His-54, His-58, and Cys-128.

The protein belongs to the LuxS family. Homodimer. Fe cation is required as a cofactor.

It catalyses the reaction S-(5-deoxy-D-ribos-5-yl)-L-homocysteine = (S)-4,5-dihydroxypentane-2,3-dione + L-homocysteine. Functionally, involved in the synthesis of autoinducer 2 (AI-2) which is secreted by bacteria and is used to communicate both the cell density and the metabolic potential of the environment. The regulation of gene expression in response to changes in cell density is called quorum sensing. Catalyzes the transformation of S-ribosylhomocysteine (RHC) to homocysteine (HC) and 4,5-dihydroxy-2,3-pentadione (DPD). In Serratia proteamaculans (strain 568), this protein is S-ribosylhomocysteine lyase.